The sequence spans 335 residues: Methionine import ATP-binding protein MetN 2 (335 aa).

Residues 2-242 (IEFHNVHKTY…PQHSTTKRFV (241 aa)) form the ABC transporter domain. 38 to 45 (GHSGAGKS) lines the ATP pocket.

This sequence belongs to the ABC transporter superfamily. Methionine importer (TC 3.A.1.24) family. In terms of assembly, the complex is composed of two ATP-binding proteins (MetN), two transmembrane proteins (MetI) and a solute-binding protein (MetQ).

It is found in the cell inner membrane. It carries out the reaction L-methionine(out) + ATP + H2O = L-methionine(in) + ADP + phosphate + H(+). The catalysed reaction is D-methionine(out) + ATP + H2O = D-methionine(in) + ADP + phosphate + H(+). In terms of biological role, part of the ABC transporter complex MetNIQ involved in methionine import. Responsible for energy coupling to the transport system. This is Methionine import ATP-binding protein MetN 2 from Pseudomonas syringae pv. tomato (strain ATCC BAA-871 / DC3000).